The sequence spans 328 residues: 2,4-dinitroanisole O-demethylase subunit alpha (328 aa).

The propeptide occupies 1–9; sequence MSVTSQTSS. Zn(2+) is bound by residues His-101, His-103, Asp-105, His-168, His-225, and Cys-247.

The protein belongs to the metallo-beta-lactamase superfamily. Part of the complex DnhAB composed of the 2,4-dinitroanisole O-demethylase alpha (DnhA) and beta (DnhB) subunits. Zn(2+) is required as a cofactor.

The catalysed reaction is 2,4-dinitroanisole + H2O = 2,4-dinitrophenol + methanol + H(+). Its function is as follows. Involved in the degradation of 2,4-dinitroanisole (DNAN), an insensitive munition ingredient used in explosive formulations as a replacement for 2,4,6-trinitrotoluene (TNT). Catalyzes the removal of the methyl group from 2,4-dinitroanisole (DNAN) to yield 2,4-dinitrophenol (2,4-DNP) and methanol. The sequence is that of 2,4-dinitroanisole O-demethylase subunit alpha from Nocardioides sp. (strain JS1661).